Here is a 97-residue protein sequence, read N- to C-terminus: Large ribosomal subunit protein uL23 (97 aa).

The protein belongs to the universal ribosomal protein uL23 family. In terms of assembly, part of the 50S ribosomal subunit. Contacts protein L29, and trigger factor when it is bound to the ribosome.

In terms of biological role, one of the early assembly proteins it binds 23S rRNA. One of the proteins that surrounds the polypeptide exit tunnel on the outside of the ribosome. Forms the main docking site for trigger factor binding to the ribosome. This Pelagibacter ubique (strain HTCC1062) protein is Large ribosomal subunit protein uL23.